Reading from the N-terminus, the 1161-residue chain is MSSLSADRKPPLDYGVQIRFIKDLDDAGGGFPDKSRLANGVGGVSNGTSSPSKYGVAVRVQGISGQPYVVLQDGEKGDSYGVQLKTQPQIQSAPPVVSQTSPYNTLLLGQREGARTPQGSYNPTDQPSSPDEDFGSPLRRPPGDGQAGTQGEAEPRTTERFTPSALAPKLDKKDNDAFNEAGLRKVKQNGIGSSLNGTGLNGSFPPPSSAQDEDQAPAIDTKSLAPINKLISRFGGGGGGSGDILNSEAQTRPRLDNRVRSQSADALNKPSEEASSTSPTINPYAPNTSATVPKLNSTKPSSTGSLGRDATSVAKVAAIPNFKPLAFNQSPKLFAPKEAPPAVPKKPVTPDLIKSQTTSIENGNGEDDQTKQAIYNILKEGSIEKEEAIKRKASLIHERFCGVKAPQISVTDSNMKTELEQAFGRNTQLQQQLDKSRRELQENQDQMVELRMDREGAESRLRQQEDQLAQLQEELRRTLENSPQSDSMQLDLLTVQAELSESQLLRQKLEDTLRQRERELTALKGALKDEVASHDKEMEALREQFSQDMDALRHSMETVSQSQLEIEEERQKVNASILAMEEELEGYKEQSEQWKKQFSSANQELLKAQQGKRELEEKLLAVVKQTDETDSNSVMKELQQCRDSLKKAQSELEKQKAETLKKQEELKSATRASEKRETELKAEIDRLINQLKKEKEELSKAIEKTQQPLVSDQTKDPESNLELQEANARLRERIARMTRLHSSVPDSSSSDALEEENRSLKTQLEESRRAASRLGVEKEELNRRLEEREREREALRRGKSDLEEQKRLLDRSLDKINKEMESMMGDSRQSVQVLQSQLEEFRDRSRRELQDAQRLSKDRLVELQRAQALLKTTQEEVSRVKKELLSCTEERDSTQLDKELLSSRLKNMETELQTDRSSQTDRSREIRLLEDKVKTLEIELDEEKSGAELLNERITRCREQVDQLRSELMQERSARHDLEMDKSALERQIKELKSRIADMGTQSRPSAGVTMLENKVQELEDRLRSEEREKNTIQAAQRRLDRKLKDVTATLDQERNQHAEQRDQLSLRVKALKRQLDESEGEVERLEGVRRKVLRELEEQRELQAALQAKVNAMDNELRKIQQSRRSTLGSTLSSDEEDNYSDTKSITSILTDSPLQTTSC.

A head region spans residues M1–V403. Disordered stretches follow at residues G29–K53, S79–D309, Q649–T678, S699–L721, R739–R773, and Q1123–C1161. Positions P51–G65 match the ZIM motif. Polar residues-rich tracts occupy residues L84–N104 and P117–S129. Residues N189–S203 show a composition bias toward low complexity. Polar residues predominate over residues E273–S305. A coiled-coil region spans residues S413 to T1128. Positions S742 to D751 are enriched in low complexity. The span at E755–R773 shows a compositional bias: basic and acidic residues. A tail region spans residues Q1122–C1161. The span at S1124 to S1134 shows a compositional bias: low complexity. Over residues D1143–C1161 the composition is skewed to polar residues.

The protein belongs to the cingulin family. Homodimer.

It is found in the cell junction. The protein localises to the tight junction. Its function is as follows. Probably plays a role in the formation and regulation of the tight junction (TJ) paracellular permeability barrier. Note=Localizes to the apical junction complex composed of tight and adherens junctions. This Danio rerio (Zebrafish) protein is Cingulin.